The sequence spans 183 residues: MAGGPPNTKAEMEMSLAEELNHGRQGENQEHLVIAEMMELGSRSRGASQKKQKLEQKAAGSASAKRVWNMTATRPKKMGSQLPKPRMLRESGHGDAHLQEYAGNFQGIRFHYDRNPGTDAVAQTSLEEFNVLEMEVMRRQLYAVNRRLRALEEQGATWRHRETLIIAVLVSASIANLWLWMNQ.

The disordered stretch occupies residues 42 to 66 (SRSRGASQKKQKLEQKAAGSASAKR). The chain crosses the membrane as a helical span at residues 163–181 (TLIIAVLVSASIANLWLWM).

As to quaternary structure, interacts with BIK and RNF183. Interacts with IMMT/MIC60and EMD. In terms of tissue distribution, testis-specific in fetus (aged from 6 to 11 weeks). In adult, expressed predominantly in testis, with some expression in lung, heart, kidney, adrenal gland and whole brain. Highly expressed in certain types of cancer tissues such as hepatocellular carcinoma, colon and gastric cancer. Weakly expressed in normal pancreas.

The protein resides in the mitochondrion. Its subcellular location is the mitochondrion outer membrane. The protein localises to the endoplasmic reticulum membrane. Its function is as follows. Involved in the regulation of endoplasmic reticulum (ER)-mitochondria coupling. Negatively regulates the ER-mitochondria distance and Ca(2+) transfer from ER to mitochondria possibly implicating it in the regulation of apoptosis. May collaborate with RNF183 to restrain BIK protein levels thus regulating apoptotic signaling. The polypeptide is Fetal and adult testis-expressed transcript protein (FATE1) (Homo sapiens (Human)).